A 177-amino-acid chain; its full sequence is Cell division protein ZapC (177 aa).

It belongs to the ZapC family. As to quaternary structure, interacts directly with FtsZ.

It is found in the cytoplasm. Contributes to the efficiency of the cell division process by stabilizing the polymeric form of the cell division protein FtsZ. Acts by promoting interactions between FtsZ protofilaments and suppressing the GTPase activity of FtsZ. The sequence is that of Cell division protein ZapC from Shewanella frigidimarina (strain NCIMB 400).